Here is an 879-residue protein sequence, read N- to C-terminus: DNA mismatch repair protein MutS (879 aa).

629 to 636 (GPNMAGKS) is a binding site for ATP.

This sequence belongs to the DNA mismatch repair MutS family.

Functionally, this protein is involved in the repair of mismatches in DNA. It is possible that it carries out the mismatch recognition step. This protein has a weak ATPase activity. In Ruegeria sp. (strain TM1040) (Silicibacter sp.), this protein is DNA mismatch repair protein MutS.